Reading from the N-terminus, the 289-residue chain is ATP phosphoribosyltransferase (289 aa).

The protein belongs to the ATP phosphoribosyltransferase family. Long subfamily. Mg(2+) is required as a cofactor.

Its subcellular location is the cytoplasm. The catalysed reaction is 1-(5-phospho-beta-D-ribosyl)-ATP + diphosphate = 5-phospho-alpha-D-ribose 1-diphosphate + ATP. The protein operates within amino-acid biosynthesis; L-histidine biosynthesis; L-histidine from 5-phospho-alpha-D-ribose 1-diphosphate: step 1/9. Feedback inhibited by histidine. Catalyzes the condensation of ATP and 5-phosphoribose 1-diphosphate to form N'-(5'-phosphoribosyl)-ATP (PR-ATP). Has a crucial role in the pathway because the rate of histidine biosynthesis seems to be controlled primarily by regulation of HisG enzymatic activity. This Methanosarcina mazei (strain ATCC BAA-159 / DSM 3647 / Goe1 / Go1 / JCM 11833 / OCM 88) (Methanosarcina frisia) protein is ATP phosphoribosyltransferase.